Here is a 209-residue protein sequence, read N- to C-terminus: Large ribosomal subunit protein uL3 (209 aa).

Positions A132–G153 are disordered. Q150 carries the post-translational modification N5-methylglutamine.

Belongs to the universal ribosomal protein uL3 family. In terms of assembly, part of the 50S ribosomal subunit. Forms a cluster with proteins L14 and L19. Methylated by PrmB.

In terms of biological role, one of the primary rRNA binding proteins, it binds directly near the 3'-end of the 23S rRNA, where it nucleates assembly of the 50S subunit. The sequence is that of Large ribosomal subunit protein uL3 from Erwinia tasmaniensis (strain DSM 17950 / CFBP 7177 / CIP 109463 / NCPPB 4357 / Et1/99).